Reading from the N-terminus, the 271-residue chain is Gap junction beta-5 protein (271 aa).

The Cytoplasmic portion of the chain corresponds to 1-20 (MNWSVFEGLLSGVNKYSTAF). Residues 21-40 (GRIWLSLVFVFRVLVYLVTA) traverse the membrane as a helical segment. Topologically, residues 41–75 (ERVWGDDQKDFDCNTRQPGCTNVCYDEFFPVSHVR) are extracellular. The chain crosses the membrane as a helical span at residues 76-98 (LWALQLILVTCPSLLVVMHVAYR). Over 99–124 (KAREKKYQQEVGKGYLYPNPGKKRGG) the chain is Cytoplasmic. A helical transmembrane segment spans residues 125–147 (LWWTYVCSLLFKATIDIIFLYLF). Over 148–182 (HAFYPRYTLPSMVKCHSAPCPNTVDCFIAKPSEKN) the chain is Extracellular. Residues 183 to 205 (IFIVFMLVTAIVCILLNLVELLY) traverse the membrane as a helical segment. Residues 206-271 (LVIKRCSECA…PRAHVKKTIL (66 aa)) lie on the Cytoplasmic side of the membrane. Residues 217-237 (AKRPPTAHAKNDPNWANPSSK) are disordered.

This sequence belongs to the connexin family. Beta-type (group I) subfamily. A connexon is composed of a hexamer of connexins. As to expression, expressed in skin.

It is found in the cell membrane. It localises to the cell junction. The protein localises to the gap junction. Functionally, one gap junction consists of a cluster of closely packed pairs of transmembrane channels, the connexons, through which materials of low MW diffuse from one cell to a neighboring cell. The chain is Gap junction beta-5 protein (Gjb5) from Rattus norvegicus (Rat).